A 235-amino-acid chain; its full sequence is 7-cyano-7-deazaguanine synthase (235 aa).

C7–A17 is a binding site for ATP. C185, C193, C196, and C199 together coordinate Zn(2+).

It belongs to the QueC family. Zn(2+) is required as a cofactor.

The enzyme catalyses 7-carboxy-7-deazaguanine + NH4(+) + ATP = 7-cyano-7-deazaguanine + ADP + phosphate + H2O + H(+). The protein operates within purine metabolism; 7-cyano-7-deazaguanine biosynthesis. In terms of biological role, catalyzes the ATP-dependent conversion of 7-carboxy-7-deazaguanine (CDG) to 7-cyano-7-deazaguanine (preQ(0)). The polypeptide is 7-cyano-7-deazaguanine synthase (Allorhizobium ampelinum (strain ATCC BAA-846 / DSM 112012 / S4) (Agrobacterium vitis (strain S4))).